The primary structure comprises 755 residues: Metabotropic glutamate receptor-like protein B (755 aa).

Positions 1–23 are cleaved as a signal peptide; sequence MKNLISIILLILIFFNYSKFVKS. N-linked (GlcNAc...) asparagine glycosylation is found at asparagine 16, asparagine 183, and asparagine 273. Over 24-385 the chain is Extracellular; the sequence is KNCKIAVLLS…VDYSSSMKLG (362 aa). The chain crosses the membrane as a helical span at residues 386–406; it reads ITITSSICIFLCIISIIIVLV. Over 407 to 417 the chain is Cytoplasmic; sequence FRTARIIKSAS. A helical membrane pass occupies residues 418–438; the sequence is PAFLFLILMGCILIFIGCIIF. Residues 439 to 455 lie on the Extracellular side of the membrane; that stretch reads SQSPNEGTCRARVWLLS. The chain crosses the membrane as a helical span at residues 456–476; that stretch reads IGYTIFLGSLLVKNWRIWLLF. Residues 477 to 492 are Cytoplasmic-facing; it reads DNPKLKKRSITNWKLY. A helical membrane pass occupies residues 493 to 513; sequence PWVAGILAADVLILAFWQGLG. Over 514-541 the chain is Extracellular; the sequence is NIRSESRIGIDSLTKYQYTNVCSSNDQG. Residues 542–562 form a helical membrane-spanning segment; that stretch reads SIALYILLVFHGIKLLVACFI. Residues 563-578 lie on the Cytoplasmic side of the membrane; sequence SFKIKVVDIDEFNESK. A helical membrane pass occupies residues 579 to 599; the sequence is PIASSVYIITFCLFIVIPLMV. Residues 600 to 607 are Extracellular-facing; the sequence is SPQSVTSQ. The chain crosses the membrane as a helical span at residues 608 to 628; it reads VTTICVCAIVTTLISIILLFG. Over 629–755 the chain is Cytoplasmic; sequence SKFYKMITQG…GEVEIDSNNL (127 aa). Disordered stretches follow at residues 656–676 and 691–729; these read QSLE…EENG and FSSD…NIEE. The span at 694 to 710 shows a compositional bias: acidic residues; that stretch reads DTEDDENETQQIDEEKD.

It in the N-terminal section; belongs to the BMP lipoprotein family. The protein in the C-terminal section; belongs to the G-protein coupled receptor 3 family. GABA-B receptor subfamily.

The protein localises to the membrane. This is Metabotropic glutamate receptor-like protein B (grlB) from Dictyostelium discoideum (Social amoeba).